Reading from the N-terminus, the 285-residue chain is Nucleotide-binding protein Gmet_1286 (285 aa).

8 to 15 (GLSGSGKS) contacts ATP. 59-62 (DIRG) contacts GTP.

Belongs to the RapZ-like family.

Displays ATPase and GTPase activities. This is Nucleotide-binding protein Gmet_1286 from Geobacter metallireducens (strain ATCC 53774 / DSM 7210 / GS-15).